The sequence spans 170 residues: Urease accessory protein UreE (170 aa).

The interval 144-170 is disordered; it reads GGHSHDDHDHHHGHHEHDHEHHHHHHD. Residues 146–162 show a composition bias toward basic and acidic residues; the sequence is HSHDDHDHHHGHHEHDH.

This sequence belongs to the UreE family.

It localises to the cytoplasm. Functionally, involved in urease metallocenter assembly. Binds nickel. Probably functions as a nickel donor during metallocenter assembly. This chain is Urease accessory protein UreE, found in Brucella anthropi (strain ATCC 49188 / DSM 6882 / CCUG 24695 / JCM 21032 / LMG 3331 / NBRC 15819 / NCTC 12168 / Alc 37) (Ochrobactrum anthropi).